Here is a 277-residue protein sequence, read N- to C-terminus: SPX domain-containing protein 3 (277 aa).

The region spanning 1-152 (MKFGKRLKKQ…GRLLRLPFIE (152 aa)) is the SPX domain.

In Oryza sativa subsp. indica (Rice), this protein is SPX domain-containing protein 3 (SPX3).